The following is a 155-amino-acid chain: Altered inheritance rate of mitochondria protein 29 (155 aa).

A Phosphoserine modification is found at Ser-78.

The protein belongs to the UPF0538 family.

The protein resides in the cytoplasm. Functionally, may be involved in mitochondrial organization and biogenesis. The sequence is that of Altered inheritance rate of mitochondria protein 29 (AIM29) from Saccharomyces cerevisiae (strain ATCC 204508 / S288c) (Baker's yeast).